The primary structure comprises 762 residues: Catalase-peroxidase (762 aa).

The disordered stretch occupies residues 1–22 (MAEAKCPFSQSRSNANVAGGGT). The tryptophyl-tyrosyl-methioninium (Trp-Tyr) (with M-268) cross-link spans 96-242 (WHSAGTYRVF…LAASHMGLIY (147 aa)). The active-site Proton acceptor is H97. The segment at residues 242 to 268 (YVNPEGPDGNPDPVAAARDIRTTFGRM) is a cross-link (tryptophyl-tyrosyl-methioninium (Tyr-Met) (with W-96)). H283 lines the heme b pocket.

This sequence belongs to the peroxidase family. Peroxidase/catalase subfamily. As to quaternary structure, homodimer or homotetramer. Heme b is required as a cofactor. Formation of the three residue Trp-Tyr-Met cross-link is important for the catalase, but not the peroxidase activity of the enzyme.

It localises to the cytoplasm. It catalyses the reaction H2O2 + AH2 = A + 2 H2O. It carries out the reaction 2 H2O2 = O2 + 2 H2O. In terms of biological role, bifunctional enzyme with both catalase and broad-spectrum peroxidase activity. In Aspergillus niger (strain ATCC MYA-4892 / CBS 513.88 / FGSC A1513), this protein is Catalase-peroxidase.